Here is a 437-residue protein sequence, read N- to C-terminus: COP9 signalosome complex subunit 2 (437 aa).

The PCI domain occupies 249 to 418; that stretch reads QENQWSEAQT…EVFTISQPKN (170 aa).

This sequence belongs to the CSN2 family. As to quaternary structure, component of the COP9 signalosome (CSN) complex composed of at least csn1, csn2, csn4 and csn5 subunits.

It is found in the cytoplasm. Its subcellular location is the nucleus. Its function is as follows. Component of the COP9 signalosome (CSN) complex that acts as an regulator of the ubiquitin (Ubl) conjugation pathway by mediating the deneddylation of the cullin subunit of SCF-type E3 ubiquitin-protein ligase complexes. Required, indirectly, for activation of ribonucleotide reductase through the degradation of the protein spd1, thereby supplying deoxyribonucleotides for DNA replication and repair. This is COP9 signalosome complex subunit 2 (csn2) from Schizosaccharomyces pombe (strain 972 / ATCC 24843) (Fission yeast).